A 124-amino-acid polypeptide reads, in one-letter code: Small ribosomal subunit protein uS12 (124 aa).

Aspartate 89 is modified (3-methylthioaspartic acid).

This sequence belongs to the universal ribosomal protein uS12 family. As to quaternary structure, part of the 30S ribosomal subunit. Contacts proteins S8 and S17. May interact with IF1 in the 30S initiation complex.

Its function is as follows. With S4 and S5 plays an important role in translational accuracy. In terms of biological role, interacts with and stabilizes bases of the 16S rRNA that are involved in tRNA selection in the A site and with the mRNA backbone. Located at the interface of the 30S and 50S subunits, it traverses the body of the 30S subunit contacting proteins on the other side and probably holding the rRNA structure together. The combined cluster of proteins S8, S12 and S17 appears to hold together the shoulder and platform of the 30S subunit. The chain is Small ribosomal subunit protein uS12 from Shewanella denitrificans (strain OS217 / ATCC BAA-1090 / DSM 15013).